The primary structure comprises 670 residues: Kinesin-like protein KIF2B (670 aa).

Thr122 is subject to Phosphothreonine; by PLK1. Residues Cys146–Leu173 adopt a coiled-coil conformation. Ser201 carries the phosphoserine; by PLK1 modification. One can recognise a Kinesin motor domain in the interval Arg210–Leu540. Gly300–Thr307 contacts ATP.

This sequence belongs to the TRAFAC class myosin-kinesin ATPase superfamily. Kinesin family. MCAK/KIF2 subfamily. Phosphorylation at Thr-122 by PLK1 is required for activity in the correction of kinetochore-microtubules attachment errors, while phosphorylation at Ser-201 also by PLK1 is required for the kinetochore localization and activity in prometaphase.

It localises to the cytoplasm. Its subcellular location is the cytoskeleton. It is found in the microtubule organizing center. The protein resides in the centrosome. The protein localises to the spindle. It localises to the chromosome. Its subcellular location is the centromere. It is found in the kinetochore. Functionally, plus end-directed microtubule-dependent motor required for spindle assembly and chromosome movement during mitosis. Has microtubule depolymerization activity. Plays a role in chromosome congression. In Macaca fascicularis (Crab-eating macaque), this protein is Kinesin-like protein KIF2B (KIF2B).